A 292-amino-acid polypeptide reads, in one-letter code: MKKISTFIITKNEEARIARAINSVKNITDEVIVVDNESTDDTVHIAKTLGAKVIVKPWLGYVGQKSFAESMCVNDWVLNIDADEELSQELQDEIEYIFASHNQDRYLAYQIKLLIMYRGDQKSRMFAPLNKCIRLYNKKFASFANTINSTTHDSVVFNKDVDFIGKIYLLNGIAYHYSGTSIEQLVNKANFYSSEQAKDLVKQGKKFSNFRLATEMIWWFLKAFFIRRYFVFGFDGFVDSIIFAFARFLRLAKLRELSLKSRNVIASDNYINYCMDIKSLLQKKKRSRYPKK.

The protein belongs to the glycosyltransferase 2 family. WaaE/KdtX subfamily.

This is an uncharacterized protein from Rickettsia typhi (strain ATCC VR-144 / Wilmington).